The sequence spans 330 residues: G-protein coupled receptor 74 (330 aa).

Helical transmembrane passes span 50 to 70, 85 to 105, 121 to 141, 160 to 180, 210 to 230, 252 to 272, and 295 to 315; these read LIVV…NLWL, FILI…IFSI, MVVF…LCFD, WVFC…QKAL, VAVS…CIFY, MLLF…LSFI, and LPLL…IYIL. A disulfide bridge links C117 with C195.

This sequence belongs to the G-protein coupled receptor 1 family.

The protein resides in the host membrane. The sequence is that of G-protein coupled receptor 74 (74) from Equus caballus (Horse).